The sequence spans 180 residues: NADH-quinone oxidoreductase subunit I (180 aa).

2 consecutive 4Fe-4S ferredoxin-type domains span residues Leu50 to Ala80 and Glu90 to Asp119. Residues Cys60, Cys63, Cys66, Cys70, Cys99, Cys102, Cys105, and Cys109 each coordinate [4Fe-4S] cluster.

Belongs to the complex I 23 kDa subunit family. In terms of assembly, NDH-1 is composed of 14 different subunits. Subunits NuoA, H, J, K, L, M, N constitute the membrane sector of the complex. The cofactor is [4Fe-4S] cluster.

It localises to the cell inner membrane. The enzyme catalyses a quinone + NADH + 5 H(+)(in) = a quinol + NAD(+) + 4 H(+)(out). NDH-1 shuttles electrons from NADH, via FMN and iron-sulfur (Fe-S) centers, to quinones in the respiratory chain. The immediate electron acceptor for the enzyme in this species is believed to be ubiquinone. Couples the redox reaction to proton translocation (for every two electrons transferred, four hydrogen ions are translocated across the cytoplasmic membrane), and thus conserves the redox energy in a proton gradient. This Acinetobacter baylyi (strain ATCC 33305 / BD413 / ADP1) protein is NADH-quinone oxidoreductase subunit I.